Consider the following 217-residue polypeptide: Thiosulfate dehydrogenase electron acceptor (217 aa).

The signal sequence occupies residues 1-28 (MRQFIPMRRVLAVATLGALFWAAPASWA). Cytochrome c domains follow at residues 29-104 (AAPP…SKLK) and 116-206 (AAAA…AAQP). Heme c-binding residues include Cys-37, Cys-40, His-41, Cys-137, Cys-140, and His-141.

Post-translationally, binds 2 heme c groups covalently per subunit.

In terms of biological role, acts as an electron acceptor for the thiosulfate dehydrogenase TsdA. In Thiomonas intermedia (strain K12) (Thiobacillus intermedius), this protein is Thiosulfate dehydrogenase electron acceptor (tsdB).